We begin with the raw amino-acid sequence, 369 residues long: Actin-related protein T3 (369 aa).

The protein belongs to the actin family. In terms of assembly, interacts with PFN3. In terms of tissue distribution, testis specific (at protein level). Expressed specifically in haploid germ cells.

It localises to the cytoplasm. The protein resides in the cytoskeleton. The protein localises to the nucleus. The protein is Actin-related protein T3 (Actrt3) of Mus musculus (Mouse).